A 148-amino-acid polypeptide reads, in one-letter code: Leghemoglobin 3 (148 aa).

In terms of domain architecture, Globin spans 2–148 (GFTEKQEALV…LSAAIKKAMS (147 aa)). At Y30 the chain carries Nitrated tyrosine. Residue S45 coordinates heme b. S45 is modified (phosphoserine). H63 lines the O2 pocket. Residues K66, H95, and K98 each contribute to the heme b site. A Nitrated tyrosine modification is found at Y136.

Belongs to the plant globin family. Monomer. Nitrated in effective nodules and particularly in hypoxic conditions; this mechanism may play a protective role in the symbiosis by buffering toxic peroxynitrite NO(2)(-). Nitration level decrease during nodule senescence. In terms of processing, phosphorylation at Ser-45 disrupts the molecular environment of its porphyrin ring oxygen binding pocket, thus leading to a reduced oxygen consumption and to the delivery of oxygen O(2) to symbiosomes. Stem nodules.

Its subcellular location is the cytoplasm. The protein resides in the cytosol. The protein localises to the nucleus. In terms of biological role, leghemoglobin that reversibly binds oxygen O(2) through a pentacoordinated heme iron. In stem nodules, facilitates the diffusion of oxygen to the bacteroids while preventing the bacterial nitrogenase from being inactivated by buffering dioxygen, nitric oxide and carbon monoxide, and promoting the formation of reactive oxygen species (ROS, e.g. H(2)O(2)). This role is essential for symbiotic nitrogen fixation (SNF). In Sesbania rostrata, this protein is Leghemoglobin 3.